The chain runs to 364 residues: Ribosomal RNA large subunit methyltransferase M (364 aa).

S-adenosyl-L-methionine contacts are provided by residues Ser-187, 220–223 (CPGG), Asp-239, Asp-259, and Asp-276. Lys-305 (proton acceptor) is an active-site residue.

This sequence belongs to the class I-like SAM-binding methyltransferase superfamily. RNA methyltransferase RlmE family. RlmM subfamily. As to quaternary structure, monomer.

It is found in the cytoplasm. The enzyme catalyses cytidine(2498) in 23S rRNA + S-adenosyl-L-methionine = 2'-O-methylcytidine(2498) in 23S rRNA + S-adenosyl-L-homocysteine + H(+). Functionally, catalyzes the 2'-O-methylation at nucleotide C2498 in 23S rRNA. In Aeromonas hydrophila subsp. hydrophila (strain ATCC 7966 / DSM 30187 / BCRC 13018 / CCUG 14551 / JCM 1027 / KCTC 2358 / NCIMB 9240 / NCTC 8049), this protein is Ribosomal RNA large subunit methyltransferase M.